Reading from the N-terminus, the 357-residue chain is Elongation factor Ts (357 aa).

The involved in Mg(2+) ion dislocation from EF-Tu stretch occupies residues T82–V85.

It belongs to the EF-Ts family.

The protein localises to the cytoplasm. Functionally, associates with the EF-Tu.GDP complex and induces the exchange of GDP to GTP. It remains bound to the aminoacyl-tRNA.EF-Tu.GTP complex up to the GTP hydrolysis stage on the ribosome. This Campylobacter jejuni subsp. jejuni serotype O:23/36 (strain 81-176) protein is Elongation factor Ts.